A 64-amino-acid polypeptide reads, in one-letter code: Large ribosomal subunit protein uL29 (64 aa).

This sequence belongs to the universal ribosomal protein uL29 family.

This Ralstonia pickettii (strain 12J) protein is Large ribosomal subunit protein uL29.